A 212-amino-acid chain; its full sequence is Large ribosomal subunit protein uL3 (212 aa).

At Gln153 the chain carries N5-methylglutamine.

It belongs to the universal ribosomal protein uL3 family. In terms of assembly, part of the 50S ribosomal subunit. Forms a cluster with proteins L14 and L19. Methylated by PrmB.

In terms of biological role, one of the primary rRNA binding proteins, it binds directly near the 3'-end of the 23S rRNA, where it nucleates assembly of the 50S subunit. The sequence is that of Large ribosomal subunit protein uL3 from Shewanella frigidimarina (strain NCIMB 400).